A 318-amino-acid chain; its full sequence is Replication factor C small subunit (318 aa).

An ATP-binding site is contributed by 43–50 (GPAGTGKT).

Belongs to the activator 1 small subunits family. RfcS subfamily. Heteromultimer composed of small subunits (RfcS) and large subunits (RfcL).

Its function is as follows. Part of the RFC clamp loader complex which loads the PCNA sliding clamp onto DNA. The protein is Replication factor C small subunit of Picrophilus torridus (strain ATCC 700027 / DSM 9790 / JCM 10055 / NBRC 100828 / KAW 2/3).